Here is an 840-residue protein sequence, read N- to C-terminus: Heat shock 70 kDa protein 4 (840 aa).

K53 bears the N6-acetyllysine mark. Residue S76 is modified to Phosphoserine. Phosphotyrosine is present on residues Y89 and Y336. Phosphoserine occurs at positions 393 and 415. Residue K430 is modified to N6-acetyllysine. The segment at 506–575 (NEEPMETDQN…QAKKAKVKTS (70 aa)) is disordered. A compositionally biased stretch (basic and acidic residues) spans 514-533 (QNAKEEEKMQVDQEEPHAEE). Position 538 is a phosphothreonine (T538). 2 positions are modified to phosphoserine: S546 and S647. Y660 is subject to Phosphotyrosine. K679 carries the post-translational modification N6-acetyllysine. At S756 the chain carries Phosphoserine. K773 is subject to N6-methyllysine. Residues 782-840 (IISKPKPKVEPPKEEQKNAEQNGPVDGQGDSPGPQAAEQGTDTAVPSDSDKKLPEMDID) form a disordered region. 2 stretches are compositionally biased toward basic and acidic residues: residues 788 to 799 (PKVEPPKEEQKN) and 829 to 840 (DSDKKLPEMDID).

It belongs to the heat shock protein 70 family. Interacts with TJP1/ZO-1.

The protein localises to the cytoplasm. In Canis lupus familiaris (Dog), this protein is Heat shock 70 kDa protein 4 (HSPA4).